We begin with the raw amino-acid sequence, 93 residues long: Small ribosomal subunit protein uS19 (93 aa).

Belongs to the universal ribosomal protein uS19 family.

In terms of biological role, protein S19 forms a complex with S13 that binds strongly to the 16S ribosomal RNA. The protein is Small ribosomal subunit protein uS19 of Clostridioides difficile (strain 630) (Peptoclostridium difficile).